The sequence spans 201 residues: Casparian strip membrane protein 4 (201 aa).

The disordered stretch occupies residues 1-23 (MEGKAAVTTSTEHGDGEASRTAA). The Cytoplasmic segment spans residues 1-41 (MEGKAAVTTSTEHGDGEASRTAARTVVSGSSRGGAASRALS). Residues 42–62 (VADLILRVVAVVAIVDSAIAM) traverse the membrane as a helical segment. Topologically, residues 63–87 (GTTNQTLPFFTQFLRFKAQYSDLPT) are extracellular. Asparagine 66 carries an N-linked (GlcNAc...) asparagine glycan. The helical transmembrane segment at 88-108 (LTLFVVANSAVTAYLVLSIPL) threads the bilayer. The Cytoplasmic segment spans residues 109–122 (SVVHIIRSRASYSR). The chain crosses the membrane as a helical span at residues 123-143 (LVLIFLDSVMLALVAAVASAS). At 144-172 (AAIVYLAHKGNVRANWFAVCQQFDSFCER) the chain is on the extracellular side. The chain crosses the membrane as a helical span at residues 173 to 193 (ISGPLIGSFAAMAVLLLLVLL). The Cytoplasmic portion of the chain corresponds to 194 to 201 (SAAALARR).

It belongs to the Casparian strip membrane proteins (CASP) family. In terms of assembly, homodimer and heterodimers.

Its subcellular location is the cell membrane. Its function is as follows. Regulates membrane-cell wall junctions and localized cell wall deposition. Required for establishment of the Casparian strip membrane domain (CSD) and the subsequent formation of Casparian strips, a cell wall modification of the root endodermis that determines an apoplastic barrier between the intraorganismal apoplasm and the extraorganismal apoplasm and prevents lateral diffusion. The protein is Casparian strip membrane protein 4 of Oryza sativa subsp. japonica (Rice).